Reading from the N-terminus, the 654-residue chain is Macrolide export ATP-binding/permease protein MacB (654 aa).

One can recognise an ABC transporter domain in the interval 6-244 (IEISALNRIF…TSASSATDAA (239 aa)). 42 to 49 (GTSGSGKS) serves as a coordination point for ATP. A run of 4 helical transmembrane segments spans residues 279–299 (LLTM…VAIG), 534–554 (IAVI…LVSV), 584–604 (MVCL…GALF), and 617–637 (VTAI…FGFL).

This sequence belongs to the ABC transporter superfamily. Macrolide exporter (TC 3.A.1.122) family. Homodimer. Part of the tripartite efflux system MacAB-TolC, which is composed of an inner membrane transporter, MacB, a periplasmic membrane fusion protein, MacA, and an outer membrane component, TolC. The complex forms a large protein conduit and can translocate molecules across both the inner and outer membranes. Interacts with MacA.

Its subcellular location is the cell inner membrane. In terms of biological role, part of the tripartite efflux system MacAB-TolC. MacB is a non-canonical ABC transporter that contains transmembrane domains (TMD), which form a pore in the inner membrane, and an ATP-binding domain (NBD), which is responsible for energy generation. Confers resistance against macrolides. This is Macrolide export ATP-binding/permease protein MacB from Hahella chejuensis (strain KCTC 2396).